The sequence spans 109 residues: Death-associated protein-like 1 homolog (109 aa).

2 disordered regions span residues 1-51 (MVQL…KPRS) and 76-100 (FPET…ISRI). A compositionally biased stretch (basic and acidic residues) spans 31–50 (KSADENANVEKETRKTDKPR).

The protein belongs to the DAP-DAPL1 family. As to quaternary structure, associates with ribosomes; preventing translation. Interacts with eiF5a (eif5a and eif5a2); preventing translation.

Its function is as follows. Ribosome-binding protein that promotes ribosome hibernation, a process during which ribosomes are stabilized in an inactive state and preserved from proteasomal degradation. Acts via its association with eiF5a (eif5a and eif5a2) at the polypeptide exit tunnel of the ribosome, preventing mRNA translation. Plays a key role in ribosome hibernation in the mature egg by preventing mRNA translation, leading to ribosome inactivation. Ribosomes, which are produced in large quantities during oogenesis, are stored and translationally repressed in the egg and early embryo. The chain is Death-associated protein-like 1 homolog from Danio rerio (Zebrafish).